The sequence spans 276 residues: N-acyl homoserine lactonase AiiB (276 aa).

Positions 111, 113, 116, 191, 213, and 259 each coordinate Zn(2+).

The protein belongs to the metallo-beta-lactamase superfamily. Requires Zn(2+) as cofactor.

It carries out the reaction an N-acyl-L-homoserine lactone + H2O = an N-acyl-L-homoserine + H(+). The chain is N-acyl homoserine lactonase AiiB from Agrobacterium fabrum (strain C58 / ATCC 33970) (Agrobacterium tumefaciens (strain C58)).